Consider the following 988-residue polypeptide: MESQILNAIEIALDGSADQKLQVQAYEFLNEVKGSKSGYDTALKLLSSSPSNTLISQLKFFLYQVLEENAENLDPEDCLQLCQTLFKMLSEFIVNDLKDEAFLRNKLAQVFAKVFTQVYISTVPDFLTNLLATTQTNSQLALDYYTRILMSIHMEIGDKYITRSPALSERNMTLKDAIRSRDMSALVTSWFNILENTNNLDEVLDNTLNIIAQYVDWMEIGLFVSPQSINTIIGYLSRENERNSTCETLIHILLKKMPAQNKLELVSLLNLTNVISSIDLSDDLEFVERIAKLANQIGEELLIVLGNQPSLLDQVNEQLLKLWPIVLTFLGHEYDDVSQSVFPFIQQFLGACKKHSQLYSVELLSTLLNKTISKMEYDEEDDDSDEETERQFAEFRARLKLFQDGIASLVPDLYIEAVPIIINQSLFEGDKPWNKLELGMFELSNFSESLKNNVINAPKAKISESKPYLMFQEFLVKLINSPFIIKVNHPLIQSSFFELVVKHYSFLNSHENRKELVFKIIEIFTSPLGLLNSNDKVRLRSWYLFFRFMKLTKPKMDNEALIEDIVLKMQPLLVIKAELPTRDEDDDVVENGNFNNQQYLFETMGLLISLIPNEYVSLKVKLVQAMFQPIFNDLEKCISIANKEPIIVLQAHHSLMALGTIVRGYDYETNLKFPPEVVEKVDNAAQVVLITLENFSKSESVRDASRFAFARFIPILNSTIISGHLTKLITIIWSAPNLKISEISDFLSFLGQIAHTYRTDENIYQLLNNFLSPLFKKVFEVLDLPVTEDESLRPDISRDKNFLKKAILNFINAIIINHLPSLLVTESNKNELATVVSKLFEYAYDISDTAVSKLAIVQLINLVNVFGQEGKISDEQDKYGQSLPPVEGIDNFLMEKVVNLSFELPFRKQEFVLGDAQYRLIAQDIALLLKTFQQKKGEQFVEYLSVYLTNMGLGQDMTNDFCSNLINLDLKDYKKYFVTFVSQMKGEK.

This sequence belongs to the exportin family.

The protein localises to the nucleus. It localises to the cytoplasm. Functionally, tRNA nucleus export receptor which facilitates tRNA translocation across the nuclear pore complex. Involved in pre-tRNA splicing, probably by affecting the interaction of pre-tRNA with splicing endonuclease. The protein is Exportin-T (LOS1) of Lodderomyces elongisporus (strain ATCC 11503 / CBS 2605 / JCM 1781 / NBRC 1676 / NRRL YB-4239) (Yeast).